A 263-amino-acid chain; its full sequence is Cell division protein DivIB (263 aa).

Residues M1 to L32 lie on the Cytoplasmic side of the membrane. Residues I33–I53 form a helical membrane-spanning segment. The tract at residues T51 to Y123 is alpha. A POTRA domain is found at S54 to Y123. The Extracellular portion of the chain corresponds to S54–N263. The interval K124 to G251 is beta. The interval S229–N263 is gamma.

Belongs to the FtsQ/DivIB family. DivIB subfamily. In terms of assembly, interacts with FtsL, DivIC and PBP-2B.

It is found in the cell membrane. Functionally, cell division protein that may be involved in stabilizing or promoting the assembly of the division complex. Plays an essential role in division at high temperatures, maybe by protecting FtsL from degradation or by promoting formation of the FtsL-DivIC complex. May modulate the transpeptidase activity of PBP-2B. Also required for efficient sporulation at all temperatures. Could be directly involved in the engulfment process or be required to form a sporulation septum competent for engulfment. Influences the Spo0J/Soj system of chromosome segregation. This is Cell division protein DivIB from Bacillus subtilis (strain 168).